The sequence spans 352 residues: Biotin synthase (352 aa).

The 219-residue stretch at 44–262 folds into the Radical SAM core domain; sequence NRVQVSTLLS…LAVARILMPK (219 aa). Residues Cys-59, Cys-63, and Cys-66 each contribute to the [4Fe-4S] cluster site. 4 residues coordinate [2Fe-2S] cluster: Cys-103, Cys-134, Cys-194, and Arg-266.

The protein belongs to the radical SAM superfamily. Biotin synthase family. As to quaternary structure, homodimer. [4Fe-4S] cluster is required as a cofactor. It depends on [2Fe-2S] cluster as a cofactor.

It carries out the reaction (4R,5S)-dethiobiotin + (sulfur carrier)-SH + 2 reduced [2Fe-2S]-[ferredoxin] + 2 S-adenosyl-L-methionine = (sulfur carrier)-H + biotin + 2 5'-deoxyadenosine + 2 L-methionine + 2 oxidized [2Fe-2S]-[ferredoxin]. The protein operates within cofactor biosynthesis; biotin biosynthesis; biotin from 7,8-diaminononanoate: step 2/2. Functionally, catalyzes the conversion of dethiobiotin (DTB) to biotin by the insertion of a sulfur atom into dethiobiotin via a radical-based mechanism. The chain is Biotin synthase from Pseudomonas entomophila (strain L48).